The chain runs to 600 residues: Pyranose dehydrogenase 2 (600 aa).

An N-terminal signal peptide occupies residues 1 to 25; that stretch reads MLSRVAKLNSRLVSLALLGSQIAFG. N-linked (GlcNAc...) asparagine glycosylation is found at Asn-99 and Asn-114. His-127 bears the Tele-8alpha-FAD histidine mark. 3 N-linked (GlcNAc...) asparagine glycosylation sites follow: Asn-199, Asn-275, and Asn-342. Catalysis depends on His-535, which acts as the Proton acceptor. His-579 is a catalytic residue.

The protein belongs to the GMC oxidoreductase family. As to quaternary structure, monomer. FAD is required as a cofactor. N-glycosylated.

It localises to the secreted. The enzyme catalyses pyranose + acceptor = pyranos-2-ulose + reduced acceptor.. The catalysed reaction is pyranose + acceptor = pyranos-3-ulose + reduced acceptor.. It catalyses the reaction pyranose + acceptor = pyranos-2,3-diulose + reduced acceptor.. It carries out the reaction a pyranoside + acceptor = a pyranosid-3-ulose + reduced acceptor.. The enzyme catalyses a pyranoside + acceptor = a pyranosid-3,4-diulose + reduced acceptor.. Functionally, catalyzes the single-oxidation or sequential double oxidation reaction of carbohydrates primarily at carbon-2 and/or carbon-3 with the concomitant reduction of the flavin. The enzyme exhibits a broad sugar substrate specificity, oxidizing different aldopyranoses to the corresponding C-1, C-2, C-3 or C-1,2, C-2,3 and C-3,4 (di)dehydro sugars with substrate-specific regioselectivity. Accepts only a narrow range of electron acceptors such as substituted benzoquinones and complexed metal ions and reacts extremely slowly with O(2) as acceptor. May play a role in the natural recycling of plant matter by oxidizing all major monosaccharides in lignocellulose and by reducing quinone compounds or reactive radical species generated during lignin depolymerization. This chain is Pyranose dehydrogenase 2, found in Leucoagaricus meleagris (Western flat-topped agaric).